Consider the following 505-residue polypeptide: Formate--tetrahydrofolate ligase (505 aa).

This sequence belongs to the formate--tetrahydrofolate ligase family.

It carries out the reaction (6S)-5,6,7,8-tetrahydrofolate + formate + ATP = (6R)-10-formyltetrahydrofolate + ADP + phosphate. It participates in one-carbon metabolism; tetrahydrofolate interconversion. This chain is Formate--tetrahydrofolate ligase (fhs), found in Bifidobacterium longum (strain NCC 2705).